Here is a 966-residue protein sequence, read N- to C-terminus: Collagen alpha-1(I) chain (966 aa).

The tract at residues 1-966 (SYGYDEKSAG…PGPPGPPGPP (966 aa)) is disordered. Lys7 carries the allysine modification. Ser8 carries the post-translational modification Phosphoserine. 11 positions are modified to 4-hydroxyproline: Pro27, Pro30, Pro32, Pro41, Pro44, Pro47, Pro61, Pro76, Pro82, Pro91, and Pro97. Positions 64-78 (NGDDGEAGKPGRPGE) are enriched in basic and acidic residues. Lys100 carries the post-translational modification 5-hydroxylysine; alternate. O-linked (Gal...) hydroxylysine; alternate glycosylation occurs at Lys100. Ser106 is modified (phosphoserine). Over residues 114-130 (DAGPAGPKGEPGSPGEN) the composition is skewed to low complexity. Residues Pro124, Pro127, Pro133, Pro142, Pro148, Pro169, Pro178, Pro181, Pro208, Pro211, Pro223, Pro229, Pro238, Pro244, Pro247, and Pro262 each carry the 4-hydroxyproline modification. Residues 148–166 (PGASGPAGARGNDGATGAA) show a composition bias toward low complexity. Residues 168 to 180 (PPGPTGPAGPPGF) show a composition bias toward pro residues. The span at 214–253 (AGAAGPAGNPGADGQPGAKGANGAPGIAGAPGFPGARGPS) shows a compositional bias: low complexity. A 5-hydroxylysine modification is found at Lys265. Residues Pro271, Pro274, Pro286, Pro295, Pro310, Pro316, Pro325, and Pro331 each carry the 4-hydroxyproline modification. Positions 320 to 329 (GERGGPGSRG) are enriched in gly residues. The residue at position 340 (Lys340) is a 5-hydroxylysine. A 4-hydroxyproline mark is found at Pro349, Pro358, Pro364, Pro370, Pro379, Pro382, Pro391, Pro400, Pro406, Pro418, Pro427, Pro436, Pro439, Pro457, Pro475, Pro481, Pro487, Pro493, Pro499, Pro505, Pro517, Pro526, Pro538, Pro542, Pro548, Pro554, and Pro563. Residues 373-399 (KGLTGSPGSPGPDGKTGPPGPAGQDGR) show a composition bias toward low complexity. Over residues 408 to 427 (ARGQAGVMGFPGPKGAAGEP) the composition is skewed to low complexity. Residues 469-496 (QGPAGSPGFQGLPGPAGPPGEAGKPGEQ) show a composition bias toward low complexity. Residue Lys575 is modified to 5-hydroxylysine. A 4-hydroxyproline mark is found at Pro581, Pro596, and Pro602. Over residues 608–622 (SGPSGPAGPTGARGA) the composition is skewed to low complexity. Ser611 carries the phosphoserine modification. 4-hydroxyproline occurs at positions 623, 629, 632, 641, 647, 665, 674, and 683. A compositionally biased stretch (low complexity) spans 635-662 (AGFAGPPGADGQPGAKGEPGDAGAKGDA). Residues 664-676 (PPGPAGPTGPPGP) are compositionally biased toward pro residues. Lys686 carries the 5-hydroxylysine modification. Residues 691–707 (SAGPPGATGFPGAAGRV) show a composition bias toward low complexity. Residues Pro695 and Pro701 each carry the 4-hydroxyproline modification. At Pro709 the chain carries 3-hydroxyproline. A 4-hydroxyproline mark is found at Pro710, Pro719, Pro722, Pro746, Pro755, Pro773, Pro782, Pro785, Pro791, Pro806, Pro812, Pro818, Pro826, and Pro832. Residues 736–755 (ETGPAGEKGSPGADGPAGAP) are compositionally biased toward low complexity. Over residues 805–815 (PPGPVGPPGLA) the composition is skewed to pro residues. Gly residues predominate over residues 824 to 835 (EGPGAEGSPGRG). Positions 852–866 (AGPAGARGPAGPQGP) are enriched in low complexity. Residues 867–881 (RGDKGETGEQGDRGI) are compositionally biased toward basic and acidic residues. Position 870 is a 5-hydroxylysine (Lys870). At Lys882 the chain carries 5-hydroxylysine; alternate. Lys882 carries O-linked (Gal...) hydroxylysine; alternate glycosylation. 4 positions are modified to 4-hydroxyproline: Pro897, Pro900, Pro918, and Pro933. Residues 900–933 (PGEQGPSGASGPAGPRGPPGSAGSPGKDGLNGLP) are compositionally biased toward low complexity. Pro938 is modified (3-hydroxyproline). Pro939 carries the 4-hydroxyproline modification. The segment covering 951–966 (VGPPGPPGPPGPPGPP) has biased composition (pro residues). At Pro953 the chain carries 3-hydroxyproline. The residue at position 954 (Pro954) is a 4-hydroxyproline. Pro956 is subject to 3-hydroxyproline. Residue Pro957 is modified to 4-hydroxyproline. Pro959 is subject to 3-hydroxyproline. 4-hydroxyproline occurs at positions 960, 963, and 966.

Belongs to the fibrillar collagen family. As to quaternary structure, trimers of one alpha 2(I) and two alpha 1(I) chains. Post-translationally, contains mostly 4-hydroxyproline. Proline residues at the third position of the tripeptide repeating unit (G-X-Y) are hydroxylated in some or all of the chains. In terms of processing, contains 3-hydroxyproline at a few sites. This modification occurs on the first proline residue in the sequence motif Gly-Pro-Hyp, where Hyp is 4-hydroxyproline. Lysine residues at the third position of the tripeptide repeating unit (G-X-Y) are 5-hydroxylated in some or all of the chains. Post-translationally, O-glycosylated on hydroxylated lysine residues. The O-linked glycan consists of a Glc-Gal disaccharide. In terms of tissue distribution, expressed in bones.

The protein resides in the secreted. The protein localises to the extracellular space. It localises to the extracellular matrix. Its function is as follows. Type I collagen is a member of group I collagen (fibrillar forming collagen). The sequence is that of Collagen alpha-1(I) chain from Bradypus variegatus (Brown-throated three-fingered sloth).